Consider the following 145-residue polypeptide: Small ribosomal subunit protein uS9 (145 aa).

The protein belongs to the universal ribosomal protein uS9 family.

It localises to the cytoplasm. The protein is Small ribosomal subunit protein uS9 (RPS16) of Fritillaria agrestis (Stinkbells).